Here is a 501-residue protein sequence, read N- to C-terminus: Pentatricopeptide repeat-containing protein At4g14190, chloroplastic (501 aa).

The N-terminal 88 residues, M1–Q88, are a transit peptide targeting the chloroplast. 5 PPR repeats span residues S130–D160, S166–P200, I201–R235, D236–L270, and E271–L305.

This sequence belongs to the PPR family. P subfamily.

The protein localises to the plastid. The protein resides in the chloroplast. This is Pentatricopeptide repeat-containing protein At4g14190, chloroplastic from Arabidopsis thaliana (Mouse-ear cress).